The chain runs to 163 residues: Photosystem II extrinsic protein V (163 aa).

The N-terminal stretch at methionine 1 to alanine 26 is a signal peptide. The heme c site is built by cysteine 63, cysteine 66, histidine 67, and histidine 118.

Belongs to the cytochrome c family. PsbV subfamily. As to quaternary structure, PSII is composed of 1 copy each of membrane proteins PsbA, PsbB, PsbC, PsbD, PsbE, PsbF, PsbH, PsbI, PsbJ, PsbK, PsbL, PsbM, PsbT, PsbY, PsbZ, Psb30/Ycf12, at least 3 peripheral proteins of the oxygen-evolving complex and a large number of cofactors. It forms dimeric complexes. Requires heme c as cofactor.

It is found in the plastid. The protein resides in the chloroplast thylakoid membrane. In terms of biological role, one of the extrinsic, lumenal subunits of photosystem II (PSII). PSII is a light-driven water plastoquinone oxidoreductase, using light energy to abstract electrons from H(2)O, generating a proton gradient subsequently used for ATP formation. The extrinsic proteins stabilize the structure of photosystem II oxygen-evolving complex (OEC), the ion environment of oxygen evolution and protect the OEC against heat-induced inactivation. This chain is Photosystem II extrinsic protein V, found in Trieres chinensis (Marine centric diatom).